Here is a 144-residue protein sequence, read N- to C-terminus: Benzoylsuccinyl-CoA thiolase subunit BbsA (144 aa).

The Zn(2+) site is built by Cys-40, Cys-43, Cys-54, and Cys-57.

Belongs to the BbsA family. As to quaternary structure, heterotetramer composed of two BbsA subunits and two BbsB subunits. BbsA forms homodimeric subcomplexes. Both BbsA and BbsB are essential for enzymatic activity.

It carries out the reaction (S)-2-benzoylsuccinyl-CoA + CoA = benzoyl-CoA + succinyl-CoA. Its pathway is xenobiotic degradation; toluene degradation. Component of the BbsAB thiolase complex, which catalyzes the thiolytic cleavage of (S)-2-benzoylsuccinyl-CoA to succinyl-CoA and benzoyl-CoA, the final step of anaerobic toluene metabolism. The BbsA subunit critically contributes to an induced-fit process for productive binding of a CoA substrate into the active site of BbsB. This is Benzoylsuccinyl-CoA thiolase subunit BbsA from Thauera aromatica.